A 29-amino-acid chain; its full sequence is Trypsin inhibitor 4 (29 aa).

3 disulfide bridges follow: C3-C20, C10-C22, and C16-C28.

Belongs to the protease inhibitor I7 (squash-type serine protease inhibitor) family.

It is found in the secreted. Its function is as follows. Strongly inhibits trypsin, weakly inhibits chymotrypsin. This chain is Trypsin inhibitor 4, found in Cyclanthera pedata (Achocha).